The chain runs to 69 residues: DNA-directed RNA polymerase subunit omega (69 aa).

It belongs to the RNA polymerase subunit omega family. The RNAP catalytic core consists of 2 alpha, 1 beta, 1 beta' and 1 omega subunit. When a sigma factor is associated with the core the holoenzyme is formed, which can initiate transcription.

It carries out the reaction RNA(n) + a ribonucleoside 5'-triphosphate = RNA(n+1) + diphosphate. Promotes RNA polymerase assembly. Latches the N- and C-terminal regions of the beta' subunit thereby facilitating its interaction with the beta and alpha subunits. In Pelotomaculum thermopropionicum (strain DSM 13744 / JCM 10971 / SI), this protein is DNA-directed RNA polymerase subunit omega.